An 804-amino-acid polypeptide reads, in one-letter code: Exo-1,4-beta-xylosidase xlnD (804 aa).

A signal peptide spans Met-1–Ala-26. N-linked (GlcNAc...) asparagine glycosylation is found at Asn-29, Asn-124, Asn-148, Asn-242, and Asn-251. The active site involves Asp-315. N-linked (GlcNAc...) asparagine glycans are attached at residues Asn-357, Asn-390, Asn-413, Asn-444, Asn-455, Asn-573, Asn-665, Asn-696, and Asn-718.

Belongs to the glycosyl hydrolase 3 family.

The protein resides in the secreted. It carries out the reaction Hydrolysis of (1-&gt;4)-beta-D-xylans, to remove successive D-xylose residues from the non-reducing termini.. The protein operates within glycan degradation; xylan degradation. Its function is as follows. Xylan 1,4-beta-xylosidase involved in the hydrolysis of xylan, a major structural heterogeneous polysaccharide found in plant biomass representing the second most abundant polysaccharide in the biosphere, after cellulose. The protein is Exo-1,4-beta-xylosidase xlnD (xlnD) of Aspergillus awamori (Black koji mold).